Reading from the N-terminus, the 376-residue chain is N-acetyldiaminopimelate deacetylase (376 aa).

Aspartate 69 is an active-site residue. Catalysis depends on glutamate 128, which acts as the Proton acceptor.

Belongs to the peptidase M20A family. N-acetyldiaminopimelate deacetylase subfamily.

It catalyses the reaction N-acetyl-(2S,6S)-2,6-diaminopimelate + H2O = (2S,6S)-2,6-diaminopimelate + acetate. The protein operates within amino-acid biosynthesis; L-lysine biosynthesis via DAP pathway; LL-2,6-diaminopimelate from (S)-tetrahydrodipicolinate (acetylase route): step 3/3. Catalyzes the conversion of N-acetyl-diaminopimelate to diaminopimelate and acetate. The protein is N-acetyldiaminopimelate deacetylase of Bacillus cereus (strain 03BB102).